Here is a 154-residue protein sequence, read N- to C-terminus: NSGYSNIHNEMLFDFVVFVFTGPRTRKVKRREKKADEKRPRTAFSASQLQRLKQEFQQSNYLTEQRRRSLAKELTLSESQIKIWFQNKRAKIKKASGLKNDLARQLMAQGLYNHSTVPLEADSMDTKLLNGQNTSGDCSRSDYTSDSDGDSLTH.

The homeobox DNA-binding region spans 37-96; that stretch reads EKRPRTAFSASQLQRLKQEFQQSNYLTEQRRRSLAKELTLSESQIKIWFQNKRAKIKKAS. The disordered stretch occupies residues 127-154; that stretch reads KLLNGQNTSGDCSRSDYTSDSDGDSLTH. The segment covering 129 to 144 has biased composition (polar residues); sequence LNGQNTSGDCSRSDYT. A compositionally biased stretch (acidic residues) spans 145–154; sequence SDSDGDSLTH.

This sequence belongs to the engrailed homeobox family.

It localises to the nucleus. The polypeptide is Homeobox protein engrailed (EN) (Tripneustes gratilla (Hawaian sea urchin)).